Consider the following 373-residue polypeptide: Chorismate synthase (373 aa).

NADP(+) is bound at residue Arg46. Residues 123–125, 250–251, Gly295, 310–314, and Arg337 contribute to the FMN site; these read RSS, NA, and KPTPS.

The protein belongs to the chorismate synthase family. It depends on FMNH2 as a cofactor.

It catalyses the reaction 5-O-(1-carboxyvinyl)-3-phosphoshikimate = chorismate + phosphate. The protein operates within metabolic intermediate biosynthesis; chorismate biosynthesis; chorismate from D-erythrose 4-phosphate and phosphoenolpyruvate: step 7/7. Catalyzes the anti-1,4-elimination of the C-3 phosphate and the C-6 proR hydrogen from 5-enolpyruvylshikimate-3-phosphate (EPSP) to yield chorismate, which is the branch point compound that serves as the starting substrate for the three terminal pathways of aromatic amino acid biosynthesis. This reaction introduces a second double bond into the aromatic ring system. In Methanococcus aeolicus (strain ATCC BAA-1280 / DSM 17508 / OCM 812 / Nankai-3), this protein is Chorismate synthase.